The following is a 368-amino-acid chain: NAD(P)H-quinone oxidoreductase subunit 1, chloroplastic (368 aa).

9 helical membrane passes run 11-31 (RVINLSFVLGFIKEIFGLIWI), 33-53 (IYILIPILGVLIGLLVIVWLE), 98-118 (WLFSIGPAIVVIPILSSYLVI), 131-151 (IGVFFRIAVSSIAPLGLLMAG), 177-197 (LALCVLSISLLSNSLGTVDIV), 205-225 (FWGWNLWRQPIGFIAFFISSL), 255-275 (FGLFYVASYLNLLASSLFVTI), 305-325 (VLGITMGILITLAKAYLFLFI), and 348-368 (FLLPIALGNLLLTASFQLLLL).

Belongs to the complex I subunit 1 family. As to quaternary structure, NDH is composed of at least 16 different subunits, 5 of which are encoded in the nucleus.

The protein localises to the plastid. It localises to the chloroplast thylakoid membrane. The catalysed reaction is a plastoquinone + NADH + (n+1) H(+)(in) = a plastoquinol + NAD(+) + n H(+)(out). It carries out the reaction a plastoquinone + NADPH + (n+1) H(+)(in) = a plastoquinol + NADP(+) + n H(+)(out). Functionally, NDH shuttles electrons from NAD(P)H:plastoquinone, via FMN and iron-sulfur (Fe-S) centers, to quinones in the photosynthetic chain and possibly in a chloroplast respiratory chain. The immediate electron acceptor for the enzyme in this species is believed to be plastoquinone. Couples the redox reaction to proton translocation, and thus conserves the redox energy in a proton gradient. In Cycas taitungensis (Prince sago), this protein is NAD(P)H-quinone oxidoreductase subunit 1, chloroplastic.